The chain runs to 488 residues: Diacylglycerol kinase 3 (488 aa).

The interval 1–24 (MDSPVSKTDASKEKFVASRPSTAD) is disordered. The region spanning 87-245 (APHAPMVVFI…SWKILVSMPS (159 aa)) is the DAGKc domain.

It belongs to the eukaryotic diacylglycerol kinase family. As to quaternary structure, monomer.

It catalyses the reaction a 1,2-diacyl-sn-glycerol + ATP = a 1,2-diacyl-sn-glycero-3-phosphate + ADP + H(+). In terms of biological role, phosphorylates the second messenger diacylglycerol (DAG) to generate phosphatidic acid (PA), another important signaling molecule. PA is required for plant development and responses to abiotic stress and pathogen attack. May be involved in the accumulation of PA during cold stress. The sequence is that of Diacylglycerol kinase 3 (DGK3) from Arabidopsis thaliana (Mouse-ear cress).